A 179-amino-acid chain; its full sequence is uncharacterized protein (179 aa).

2 disordered regions span residues 26 to 103 (LSAV…SYED) and 136 to 179 (KHKA…SWFN). A compositionally biased stretch (basic and acidic residues) spans 34–61 (QQGKNEEQRQHDEWVAERNREIQQEKQR). A compositionally biased stretch (low complexity) spans 63 to 79 (ANAQAAANKRAATAAAN). Basic and acidic residues-rich tracts occupy residues 82 to 103 (ARQD…SYED) and 158 to 179 (GGRD…SWFN).

This is an uncharacterized protein from Escherichia coli (strain K12).